The sequence spans 366 residues: Chorismate synthase (366 aa).

Arg48 and Arg54 together coordinate NADP(+). FMN-binding positions include 125-127 (RSS), 238-239 (NA), Gly278, 293-297 (KPTSS), and Arg319.

It belongs to the chorismate synthase family. As to quaternary structure, homotetramer. FMNH2 serves as cofactor.

It catalyses the reaction 5-O-(1-carboxyvinyl)-3-phosphoshikimate = chorismate + phosphate. Its pathway is metabolic intermediate biosynthesis; chorismate biosynthesis; chorismate from D-erythrose 4-phosphate and phosphoenolpyruvate: step 7/7. In terms of biological role, catalyzes the anti-1,4-elimination of the C-3 phosphate and the C-6 proR hydrogen from 5-enolpyruvylshikimate-3-phosphate (EPSP) to yield chorismate, which is the branch point compound that serves as the starting substrate for the three terminal pathways of aromatic amino acid biosynthesis. This reaction introduces a second double bond into the aromatic ring system. In Neisseria gonorrhoeae (strain ATCC 700825 / FA 1090), this protein is Chorismate synthase.